A 290-amino-acid polypeptide reads, in one-letter code: tRNA(Ile)-lysidine synthase (290 aa).

12 to 17 (SGGSDS) lines the ATP pocket.

It belongs to the tRNA(Ile)-lysidine synthase family.

The protein localises to the cytoplasm. It catalyses the reaction cytidine(34) in tRNA(Ile2) + L-lysine + ATP = lysidine(34) in tRNA(Ile2) + AMP + diphosphate + H(+). Functionally, ligates lysine onto the cytidine present at position 34 of the AUA codon-specific tRNA(Ile) that contains the anticodon CAU, in an ATP-dependent manner. Cytidine is converted to lysidine, thus changing the amino acid specificity of the tRNA from methionine to isoleucine. The chain is tRNA(Ile)-lysidine synthase from Mycoplasma genitalium (strain ATCC 33530 / DSM 19775 / NCTC 10195 / G37) (Mycoplasmoides genitalium).